Here is a 273-residue protein sequence, read N- to C-terminus: Orotidine 5'-phosphate decarboxylase (273 aa).

The active-site Proton donor is Lys96.

Belongs to the OMP decarboxylase family. Type 2 subfamily.

It catalyses the reaction orotidine 5'-phosphate + H(+) = UMP + CO2. The protein operates within pyrimidine metabolism; UMP biosynthesis via de novo pathway; UMP from orotate: step 2/2. The protein is Orotidine 5'-phosphate decarboxylase of Nocardioides sp. (strain ATCC BAA-499 / JS614).